Here is a 478-residue protein sequence, read N- to C-terminus: Probable cytosolic Fe-S cluster assembly factor AAEL012261 (478 aa).

The [4Fe-4S] cluster site is built by Cys-23, Cys-69, Cys-72, Cys-75, Cys-189, Cys-245, Cys-396, and Cys-400.

This sequence belongs to the NARF family.

Component of the cytosolic iron-sulfur (Fe/S) protein assembly machinery. Required for maturation of extramitochondrial Fe/S proteins. In Aedes aegypti (Yellowfever mosquito), this protein is Probable cytosolic Fe-S cluster assembly factor AAEL012261.